The primary structure comprises 101 residues: Urease subunit beta (101 aa).

This sequence belongs to the urease beta subunit family. In terms of assembly, heterotrimer of UreA (gamma), UreB (beta) and UreC (alpha) subunits. Three heterotrimers associate to form the active enzyme.

The protein resides in the cytoplasm. It carries out the reaction urea + 2 H2O + H(+) = hydrogencarbonate + 2 NH4(+). Its pathway is nitrogen metabolism; urea degradation; CO(2) and NH(3) from urea (urease route): step 1/1. This is Urease subunit beta from Cupriavidus metallidurans (strain ATCC 43123 / DSM 2839 / NBRC 102507 / CH34) (Ralstonia metallidurans).